Reading from the N-terminus, the 518-residue chain is Glutamate--cysteine ligase (518 aa).

This sequence belongs to the glutamate--cysteine ligase type 1 family. Type 1 subfamily.

The enzyme catalyses L-cysteine + L-glutamate + ATP = gamma-L-glutamyl-L-cysteine + ADP + phosphate + H(+). Its pathway is sulfur metabolism; glutathione biosynthesis; glutathione from L-cysteine and L-glutamate: step 1/2. The protein is Glutamate--cysteine ligase of Citrobacter koseri (strain ATCC BAA-895 / CDC 4225-83 / SGSC4696).